The sequence spans 144 residues: Large ribosomal subunit protein uL15 (144 aa).

The tract at residues 1–53 is disordered; the sequence is MRLNTLSPAEGAKHAPKRVGRGIGSGLGKTAGRGHKGQNSRSGGGVRRGFEGG. Positions 21-31 are enriched in gly residues; it reads RGIGSGLGKTA.

This sequence belongs to the universal ribosomal protein uL15 family. In terms of assembly, part of the 50S ribosomal subunit.

In terms of biological role, binds to the 23S rRNA. This Serratia proteamaculans (strain 568) protein is Large ribosomal subunit protein uL15.